The primary structure comprises 191 residues: MDRMSMARQGWLVPCLSHGKDDQLQGELSELSKVYREKFQTDLHTKSGDIINPGGEFLYIYLDKENYRLCRQRMVLVSNASDGLLATTLEPYSDGYTFRQVRAQLQALSGDGGRINYSKNEYSSSYFLAIQASNEFERIGVVRNTFGQSKDVWKRKMPSAGQPLDYLLIAVGCSAFLPEAALEDVELDGAI.

This is an uncharacterized protein from Agrobacterium tumefaciens (strain Ach5).